Reading from the N-terminus, the 432-residue chain is Trigger factor (432 aa).

Residues 161–246 (DDRVTIDFVG…LKKVENMVLP (86 aa)) enclose the PPIase FKBP-type domain.

The protein belongs to the FKBP-type PPIase family. Tig subfamily.

Its subcellular location is the cytoplasm. The catalysed reaction is [protein]-peptidylproline (omega=180) = [protein]-peptidylproline (omega=0). Involved in protein export. Acts as a chaperone by maintaining the newly synthesized protein in an open conformation. Functions as a peptidyl-prolyl cis-trans isomerase. The polypeptide is Trigger factor (Haemophilus influenzae (strain PittGG)).